Reading from the N-terminus, the 625-residue chain is DNA-directed RNA polymerase subunit gamma (625 aa).

The Zn(2+) site is built by cysteine 71, cysteine 73, cysteine 86, and cysteine 89. Residues aspartate 467, aspartate 469, and aspartate 471 each coordinate Mg(2+).

Belongs to the RNA polymerase beta' chain family. RpoC1 subfamily. In cyanobacteria the RNAP catalytic core is composed of 2 alpha, 1 beta, 1 beta', 1 gamma and 1 omega subunit. When a sigma factor is associated with the core the holoenzyme is formed, which can initiate transcription. The cofactor is Mg(2+). Zn(2+) serves as cofactor.

The catalysed reaction is RNA(n) + a ribonucleoside 5'-triphosphate = RNA(n+1) + diphosphate. Functionally, DNA-dependent RNA polymerase catalyzes the transcription of DNA into RNA using the four ribonucleoside triphosphates as substrates. The polypeptide is DNA-directed RNA polymerase subunit gamma (Nostoc punctiforme (strain ATCC 29133 / PCC 73102)).